Here is a 192-residue protein sequence, read N- to C-terminus: Type 1 phosphatases regulator YPI2 (192 aa).

2 disordered regions span residues 1 to 53 and 65 to 192; these read MLQR…GKHK and EFGQ…PVQK. The segment covering 8–18 has biased composition (low complexity); sequence QTSSSTQTETT. Residues 25-49 are compositionally biased toward basic and acidic residues; it reads RRPETRQKEDSKVKWTEDVIDNEHM. The span at 69-79 shows a compositional bias: low complexity; sequence SSDESSDSSSD. The span at 86–103 shows a compositional bias: basic and acidic residues; sequence YERNNDFDQNHRHSHNFD. The segment covering 134 to 148 has biased composition (polar residues); the sequence is KGNTGMSKPSSSSPD. Basic residues predominate over residues 157-169; that stretch reads IHKRNKKVRKPKR.

The protein belongs to the YPI1 family.

The protein localises to the nucleus. Functionally, regulator of type 1 phosphatases which maintains protein phosphatase activity under strict control. This Scheffersomyces stipitis (strain ATCC 58785 / CBS 6054 / NBRC 10063 / NRRL Y-11545) (Yeast) protein is Type 1 phosphatases regulator YPI2 (YPI2).